Reading from the N-terminus, the 189-residue chain is MSATVPEIRSENLLRYTVIGSRRPSVYFWAVALTGGGLGFTLAGLSSYFHRNLLPFSDPASLVFIPQGIAMLFYGVLGSLAGLYQWLSLYWNLGGGYNEFDRRTQKITLVRQGFPGKNREVRLEYDFAEVQSLRVELREGFNPRRAIYLRIKGRGDIPLTGVGQPPPLAEIENQAAEIARFLNVSLEGI.

2 helical membrane-spanning segments follow: residues 25–45 (SVYFWAVALTGGGLGFTLAGL) and 62–82 (LVFIPQGIAMLFYGVLGSLAG).

The protein belongs to the Ycf4 family.

It is found in the cellular thylakoid membrane. Its function is as follows. Seems to be required for the assembly of the photosystem I complex. The protein is Photosystem I assembly protein Ycf4 of Synechococcus sp. (strain JA-3-3Ab) (Cyanobacteria bacterium Yellowstone A-Prime).